We begin with the raw amino-acid sequence, 485 residues long: Serine hydroxymethyltransferase, mitochondrial (485 aa).

At lysine 259 the chain carries N6-(pyridoxal phosphate)lysine.

The protein belongs to the SHMT family. Homotetramer. Requires pyridoxal 5'-phosphate as cofactor.

It localises to the mitochondrion. It carries out the reaction (6R)-5,10-methylene-5,6,7,8-tetrahydrofolate + glycine + H2O = (6S)-5,6,7,8-tetrahydrofolate + L-serine. The protein operates within one-carbon metabolism; tetrahydrofolate interconversion. In terms of biological role, interconversion of serine and glycine. This chain is Serine hydroxymethyltransferase, mitochondrial (SHM1), found in Candida glabrata (strain ATCC 2001 / BCRC 20586 / JCM 3761 / NBRC 0622 / NRRL Y-65 / CBS 138) (Yeast).